The chain runs to 264 residues: Thymidylate synthase (264 aa).

Arg-21 contacts dUMP. His-51 contributes to the (6R)-5,10-methylene-5,6,7,8-tetrahydrofolate binding site. 126 to 127 is a dUMP binding site; sequence RR. The active-site Nucleophile is Cys-146. DUMP is bound by residues 166–169, Asn-177, and 207–209; these read RSCD and HLY. Position 169 (Asp-169) interacts with (6R)-5,10-methylene-5,6,7,8-tetrahydrofolate. Residue Ser-263 coordinates (6R)-5,10-methylene-5,6,7,8-tetrahydrofolate.

This sequence belongs to the thymidylate synthase family. Bacterial-type ThyA subfamily. As to quaternary structure, homodimer.

It is found in the cytoplasm. The enzyme catalyses dUMP + (6R)-5,10-methylene-5,6,7,8-tetrahydrofolate = 7,8-dihydrofolate + dTMP. It functions in the pathway pyrimidine metabolism; dTTP biosynthesis. Catalyzes the reductive methylation of 2'-deoxyuridine-5'-monophosphate (dUMP) to 2'-deoxythymidine-5'-monophosphate (dTMP) while utilizing 5,10-methylenetetrahydrofolate (mTHF) as the methyl donor and reductant in the reaction, yielding dihydrofolate (DHF) as a by-product. This enzymatic reaction provides an intracellular de novo source of dTMP, an essential precursor for DNA biosynthesis. The sequence is that of Thymidylate synthase from Wigglesworthia glossinidia brevipalpis.